The following is a 183-amino-acid chain: Ribulose bisphosphate carboxylase small subunit, chloroplastic 3 (183 aa).

Residues 1 to 43 constitute a chloroplast transit peptide; sequence MATTMLNRSVIVNKEVAKTPNFPRATKNNKGFASNAAVQKCRD.

This sequence belongs to the RuBisCO small chain family. Heterohexadecamer of 8 large and 8 small subunits.

The protein localises to the plastid. The protein resides in the chloroplast. RuBisCO catalyzes two reactions: the carboxylation of D-ribulose 1,5-bisphosphate, the primary event in carbon dioxide fixation, as well as the oxidative fragmentation of the pentose substrate. Both reactions occur simultaneously and in competition at the same active site. Although the small subunit is not catalytic it is essential for maximal activity. This Acetabularia peniculus (Green alga) protein is Ribulose bisphosphate carboxylase small subunit, chloroplastic 3.